The sequence spans 339 residues: Neutrophil cytosol factor 4 (339 aa).

One can recognise a PX domain in the interval 19-140 (DVAVSANIAD…IFFYQSAYDA (122 aa)). Residues 58-60 (RYR) and 92-94 (KVY) each bind a 1,2-diacyl-sn-glycero-3-phospho-(1D-myo-inositol-3-phosphate). Phosphothreonine is present on threonine 154. Positions 170 to 229 (MEAPRAEALFDFTGNSKLELSFKAGDVIFLLSKINKDWLEGTSQGATGIFPGSFVKILKD) constitute an SH3 domain. A PB1 domain is found at 237–329 (TNWLRCYFYE…FPWKLHVTQK (93 aa)). Serine 315 bears the Phosphoserine mark.

As to quaternary structure, component of the phagocyte NADPH oxidase complex composed of an obligatory core heterodimer formed by the membrane proteins CYBA and CYBB and the cytosolic regulatory subunits NCF1/p47-phox, NCF2/p67-phox, NCF4/p40-phox and the small GTPase RAC1 or RAC2. Part of a cytosolic complex composed at least by NCF1, NCF2 and NCF4. Interacts with NCF2. Interacts with NCF1. The NCF2-NCF4 complex interacts with GBP7 (via GB1/RHD3-type G domain).

It is found in the cytoplasm. It localises to the cytosol. The protein resides in the endosome membrane. Its subcellular location is the membrane. In terms of biological role, subunit of the phagocyte NADPH oxidase complex that mediates the transfer of electrons from cytosolic NADPH to O2 to produce the superoxide anion (O2(-)). In the activated complex, electrons are first transferred from NADPH to flavin adenine dinucleotide (FAD) and subsequently transferred via two heme molecules to molecular oxygen, producing superoxide through an outer-sphere reaction. Activation of the NADPH oxidase complex is initiated by the assembly of cytosolic subunits of the NADPH oxidase complex with the core NADPH oxidase complex to form a complex at the plasma membrane or phagosomal membrane. This activation process is initiated by phosphorylation dependent binding of the cytosolic NCF1/p47-phox subunit to the C-terminus of CYBA/p22-phox. In Mus musculus (Mouse), this protein is Neutrophil cytosol factor 4.